A 222-amino-acid polypeptide reads, in one-letter code: ATP synthase F(0) complex subunit a (222 aa).

A run of 6 helical transmembrane segments spans residues 7-27 (AFFD…AILL), 64-84 (WSLM…LGLL), 93-113 (QLTV…VLGF), 132-152 (FLIP…PITL), 160-180 (ITAG…LLSV), and 197-219 (ILEL…LYLH).

It belongs to the ATPase A chain family. In terms of assembly, component of the ATP synthase complex composed at least of ATP5F1A/subunit alpha, ATP5F1B/subunit beta, ATP5MC1/subunit c (homooctomer), MT-ATP6/subunit a, MT-ATP8/subunit 8, ATP5ME/subunit e, ATP5MF/subunit f, ATP5MG/subunit g, ATP5MK/subunit k, ATP5MJ/subunit j, ATP5F1C/subunit gamma, ATP5F1D/subunit delta, ATP5F1E/subunit epsilon, ATP5PF/subunit F6, ATP5PB/subunit b, ATP5PD/subunit d, ATP5PO/subunit OSCP. ATP synthase complex consists of a soluble F(1) head domain (subunits alpha(3) and beta(3)) - the catalytic core - and a membrane F(0) domain - the membrane proton channel (subunits c, a, 8, e, f, g, k and j). These two domains are linked by a central stalk (subunits gamma, delta, and epsilon) rotating inside the F1 region and a stationary peripheral stalk (subunits F6, b, d, and OSCP). Interacts with DNAJC30; interaction is direct.

Its subcellular location is the mitochondrion inner membrane. The catalysed reaction is H(+)(in) = H(+)(out). Functionally, subunit a, of the mitochondrial membrane ATP synthase complex (F(1)F(0) ATP synthase or Complex V) that produces ATP from ADP in the presence of a proton gradient across the membrane which is generated by electron transport complexes of the respiratory chain. ATP synthase complex consist of a soluble F(1) head domain - the catalytic core - and a membrane F(1) domain - the membrane proton channel. These two domains are linked by a central stalk rotating inside the F(1) region and a stationary peripheral stalk. During catalysis, ATP synthesis in the catalytic domain of F(1) is coupled via a rotary mechanism of the central stalk subunits to proton translocation. With the subunit c (ATP5MC1), forms the proton-conducting channel in the F(0) domain, that contains two crucial half-channels (inlet and outlet) that facilitate proton movement from the mitochondrial intermembrane space (IMS) into the matrix. Protons are taken up via the inlet half-channel and released through the outlet half-channel, following a Grotthuss mechanism. The polypeptide is ATP synthase F(0) complex subunit a (Elephas maximus (Indian elephant)).